The following is a 222-amino-acid chain: Sigma non-opioid intracellular receptor 1 (222 aa).

Residues 1–6 (MSLIRT) lie on the Lumenal side of the membrane. Residues 7-29 (ILKLVVVVGFLSLTVQFIRHWMA) form a helical membrane-spanning segment. The Cytoplasmic portion of the chain corresponds to 30 to 222 (NKQYVFTKEE…STFLTESGVL (193 aa)). Residues 97 to 104 (SLTEYVLL) are important for ligand-binding. Residues 175–222 (FIPSTLGFALADTMFSTQDFLTLFYTARVYVKGMILEASTFLTESGVL) form a C-terminal hydrophobic region region.

This sequence belongs to the ERG2 family. Homotrimer.

The protein localises to the nucleus inner membrane. The protein resides in the nucleus outer membrane. Its subcellular location is the nucleus envelope. It localises to the cytoplasmic vesicle. It is found in the endoplasmic reticulum membrane. The protein localises to the membrane. In terms of biological role, may function in lipid transport from the endoplasmic reticulum and be involved in a wide array of cellular functions probably through regulation of the biogenesis of lipid microdomains at the plasma membrane. May regulate calcium efflux at the endoplasmic reticulum. The polypeptide is Sigma non-opioid intracellular receptor 1 (sigmar1) (Danio rerio (Zebrafish)).